The following is a 432-amino-acid chain: Ribosomal protein uS12 methylthiotransferase RimO (432 aa).

The MTTase N-terminal domain occupies K4 to H122. Positions 13, 51, 85, 146, 150, and 153 each coordinate [4Fe-4S] cluster. Residues T132–E363 form the Radical SAM core domain. Residues A366–I432 form the TRAM domain.

The protein belongs to the methylthiotransferase family. RimO subfamily. The cofactor is [4Fe-4S] cluster.

Its subcellular location is the cytoplasm. It catalyses the reaction L-aspartate(89)-[ribosomal protein uS12]-hydrogen + (sulfur carrier)-SH + AH2 + 2 S-adenosyl-L-methionine = 3-methylsulfanyl-L-aspartate(89)-[ribosomal protein uS12]-hydrogen + (sulfur carrier)-H + 5'-deoxyadenosine + L-methionine + A + S-adenosyl-L-homocysteine + 2 H(+). Functionally, catalyzes the methylthiolation of an aspartic acid residue of ribosomal protein uS12. This is Ribosomal protein uS12 methylthiotransferase RimO from Bacteroides fragilis (strain ATCC 25285 / DSM 2151 / CCUG 4856 / JCM 11019 / LMG 10263 / NCTC 9343 / Onslow / VPI 2553 / EN-2).